Consider the following 258-residue polypeptide: tRNA pseudouridine synthase A (258 aa).

Aspartate 52 serves as the catalytic Nucleophile. Residue tyrosine 110 coordinates substrate.

It belongs to the tRNA pseudouridine synthase TruA family. In terms of assembly, homodimer.

It catalyses the reaction uridine(38/39/40) in tRNA = pseudouridine(38/39/40) in tRNA. Functionally, formation of pseudouridine at positions 38, 39 and 40 in the anticodon stem and loop of transfer RNAs. This chain is tRNA pseudouridine synthase A, found in Francisella philomiragia subsp. philomiragia (strain ATCC 25017 / CCUG 19701 / FSC 153 / O#319-036).